A 210-amino-acid polypeptide reads, in one-letter code: Protein GrpE (210 aa).

Disordered stretches follow at residues 1–40 (MTDDTTKNGPDATAADAAADATAYVENETAQQEPAQPDPI) and 191–210 (KGGPKPAEAETNSVFDEKDA). Positions 11–23 (DATAADAAADATA) are enriched in low complexity.

The protein belongs to the GrpE family. As to quaternary structure, homodimer.

The protein resides in the cytoplasm. Participates actively in the response to hyperosmotic and heat shock by preventing the aggregation of stress-denatured proteins, in association with DnaK and GrpE. It is the nucleotide exchange factor for DnaK and may function as a thermosensor. Unfolded proteins bind initially to DnaJ; upon interaction with the DnaJ-bound protein, DnaK hydrolyzes its bound ATP, resulting in the formation of a stable complex. GrpE releases ADP from DnaK; ATP binding to DnaK triggers the release of the substrate protein, thus completing the reaction cycle. Several rounds of ATP-dependent interactions between DnaJ, DnaK and GrpE are required for fully efficient folding. The protein is Protein GrpE of Rhizobium johnstonii (strain DSM 114642 / LMG 32736 / 3841) (Rhizobium leguminosarum bv. viciae).